A 162-amino-acid polypeptide reads, in one-letter code: NADH-quinone oxidoreductase subunit I (162 aa).

2 consecutive 4Fe-4S ferredoxin-type domains span residues 54–83 (RRYENGEERCIACKLCEAVCPALAITIESE) and 93–122 (TRYDIDLTKCIFCGFCEESCPVDSIVETQI). Cys63, Cys66, Cys69, Cys73, Cys102, Cys105, Cys108, and Cys112 together coordinate [4Fe-4S] cluster.

This sequence belongs to the complex I 23 kDa subunit family. In terms of assembly, NDH-1 is composed of 14 different subunits. Subunits NuoA, H, J, K, L, M, N constitute the membrane sector of the complex. [4Fe-4S] cluster is required as a cofactor.

The protein resides in the cell inner membrane. The catalysed reaction is a quinone + NADH + 5 H(+)(in) = a quinol + NAD(+) + 4 H(+)(out). Its function is as follows. NDH-1 shuttles electrons from NADH, via FMN and iron-sulfur (Fe-S) centers, to quinones in the respiratory chain. The immediate electron acceptor for the enzyme in this species is believed to be ubiquinone. Couples the redox reaction to proton translocation (for every two electrons transferred, four hydrogen ions are translocated across the cytoplasmic membrane), and thus conserves the redox energy in a proton gradient. This Burkholderia pseudomallei (strain 668) protein is NADH-quinone oxidoreductase subunit I.